Here is a 757-residue protein sequence, read N- to C-terminus: Zinc finger CCCH domain-containing protein 5 (757 aa).

The interval 1–127 (MEQANEKEEE…REEEERRWKD (127 aa)) is disordered. A compositionally biased stretch (basic and acidic residues) spans 13-35 (HEEAAGEKESFEESKEKAAEMSR). Over residues 36 to 50 (KEKRKAMKKLKRKQV) the composition is skewed to basic residues. Residues 51–127 (RKEIAAKERE…REEEERRWKD (77 aa)) show a composition bias toward basic and acidic residues. The C3H1-type 1 zinc finger occupies 240–268 (EQDKAHCPFHLKTGACRFGQRCSRVHFYP). The RRM domain occupies 295–372 (YTDEEAELCY…KQVNCEFVNI (78 aa)). Residues 374–404 (RWKVAICGEYMKSRLKTCSRGSACNFIHCFR) form a C3H1-type 2 zinc finger. Residues 441–757 (HESSGSLNDS…EEEIERWRPV (317 aa)) are disordered. The span at 444–455 (SGSLNDSISDLS) shows a compositional bias: polar residues. Residues 487–546 (YHGDTQDSTREDKLRRHAENCHDGDDSPSRDGSLEREMYKERRYAKDTLHRDSRWSEHSP) show a composition bias toward basic and acidic residues. Basic residues-rich tracts occupy residues 547–557 (GHRVGRKRIHG) and 600–609 (KTHRSSRKHS). Basic and acidic residues-rich tracts occupy residues 610-634 (REGSSADKEEGHEHDRVHTVSDKSH), 644-672 (RSSSRYSHEEDSTESRHHQHKESDKKRSV), and 681-721 (SDKD…ETHK). The span at 722–733 (ERRHRHRKRRRT) shows a compositional bias: basic residues.

The protein is Zinc finger CCCH domain-containing protein 5 of Arabidopsis thaliana (Mouse-ear cress).